We begin with the raw amino-acid sequence, 80 residues long: Serine palmitoyltransferase small subunit A (80 aa).

The Cytoplasmic portion of the chain corresponds to 1–21; it reads MKVSCEDINGPRSSLSRAWNH. Residues 22–38 form a helical membrane-spanning segment; it reads MSWLYYQYLLVTALYML. The Lumenal segment spans residues 39–43; the sequence is EPWER. Residues 44-66 traverse the membrane as a helical segment; that stretch reads TIFNSMLVSIVGMALYTGYIFMP. The Cytoplasmic portion of the chain corresponds to 67–80; the sequence is QHILAILHYFEIVQ.

The protein belongs to the SPTSS family. SPTSSA subfamily. As to quaternary structure, component of the serine palmitoyltransferase (SPT) complex, which is composed of SPTLC1, SPTLC2 or SPTLC3 and SPTSSA or SPTSSB. The heterodimer consisting of SPTLC1 and SPTLC2/SPTLC3 forms the catalytic core of the enzyme, while SPTSSA or SPTSSB subunits determine substrate specificity. SPT also interacts with ORMDL proteins, especially ORMDL3, which negatively regulate SPT activity in the presence of ceramides.

The protein localises to the endoplasmic reticulum membrane. Its pathway is lipid metabolism; sphingolipid metabolism. Its function is as follows. Component of the serine palmitoyltransferase multisubunit enzyme (SPT) that catalyzes the initial and rate-limiting step in sphingolipid biosynthesis by condensing L-serine and activated acyl-CoA (most commonly palmitoyl-CoA) to form long-chain bases. The SPT complex is composed of SPTLC1, SPTLC2 or SPTLC3 and SPTSSA or SPTSSB. Within this complex, the heterodimer consisting of SPTLC1 and SPTLC2/SPTLC3 forms the catalytic core. Within the SPT complex, SPTSSA stimulates the catalytic activity and plays a role in substrate specificity, which depends upon the overall complex composition. The SPTLC1-SPTLC2-SPTSSA complex shows a strong preference for C16-CoA substrate, while the SPTLC1-SPTLC3-SPTSSA isozyme uses both C14-CoA and C16-CoA as substrates, with a slight preference for C14-CoA. Independently of its action as a SPT component, may be involved in MBOAT7 localization to mitochondria-associated membranes, a membrane bridge between the endoplasmic reticulum and mitochondria, may hence affect MBOAT7-catalyzed incorporation of arachidonic acid into phosphatidylinositol. The chain is Serine palmitoyltransferase small subunit A (sptssa) from Xenopus tropicalis (Western clawed frog).